The chain runs to 313 residues: MTNEKLSLQDIILTLQQYWAKQGANLMQAYDNEVGAGTQSPYTFLRANGPEPWNAAYVQPSRRPADGRYGDNPNRLFQHHQFQVVMKPSPENIQELYLGSLEALGIKALEHDIRFVEDNWENPSMGAAGIGWEVWLDGMEVTQFTYFQQVGGIEVDSVTAEVTYGLERLASYIQNVPTVYDLEWGNGVLYGDIFKEPEFEHSKYAFEESNQDMLLRHFEEFEAEATRLLDLGLVHPAYDYILKSSHTFNLLDARGTVSVTERAGYLHRIRTMARKVSKVFIEERAKLGFPLLKDQTLRDKYLGKNGKYTKENA.

This sequence belongs to the class-II aminoacyl-tRNA synthetase family. In terms of assembly, tetramer of two alpha and two beta subunits.

The protein localises to the cytoplasm. It catalyses the reaction tRNA(Gly) + glycine + ATP = glycyl-tRNA(Gly) + AMP + diphosphate. The chain is Glycine--tRNA ligase alpha subunit from Leuconostoc mesenteroides subsp. mesenteroides (strain ATCC 8293 / DSM 20343 / BCRC 11652 / CCM 1803 / JCM 6124 / NCDO 523 / NBRC 100496 / NCIMB 8023 / NCTC 12954 / NRRL B-1118 / 37Y).